We begin with the raw amino-acid sequence, 540 residues long: Type II methyltransferase M.AccI (540 aa).

Belongs to the N(4)/N(6)-methyltransferase family. Monomer.

It carries out the reaction a 2'-deoxyadenosine in DNA + S-adenosyl-L-methionine = an N(6)-methyl-2'-deoxyadenosine in DNA + S-adenosyl-L-homocysteine + H(+). In terms of biological role, a gamma subtype methylase, recognizes the double-stranded sequence 5'-GTMKAC-3', methylates A-5 on both strands, and protects the DNA from cleavage by the AccI endonuclease. The sequence is that of Type II methyltransferase M.AccI (accIM) from Acinetobacter calcoaceticus.